The primary structure comprises 87 residues: Small ribosomal subunit protein bS16 (87 aa).

The protein belongs to the bacterial ribosomal protein bS16 family.

The protein is Small ribosomal subunit protein bS16 of Onion yellows phytoplasma (strain OY-M).